Consider the following 273-residue polypeptide: Endochitinase EP3 (273 aa).

The signal sequence occupies residues 1–28 (MLTPTISKSISLVTILLVLQAFSNTTKA). A glycan (N-linked (GlcNAc...) asparagine) is linked at asparagine 24. One can recognise a Chitin-binding type-1 domain in the interval 29–63 (QNCGCSSELCCSQFGFCGNTSDYCGVGCQQGPCFA). Cystine bridges form between cysteine 31–cysteine 39, cysteine 33–cysteine 45, cysteine 38–cysteine 52, and cysteine 56–cysteine 61. Residue asparagine 47 is glycosylated (N-linked (GlcNAc...) asparagine). The catalytic stretch occupies residues 70–273 (VSVAEIVTQE…GVDPGNNLTC (204 aa)). The active-site Proton donor is glutamate 136. N-linked (GlcNAc...) asparagine glycans are attached at residues asparagine 157 and asparagine 270.

The protein belongs to the glycosyl hydrolase 19 family. Chitinase class I subfamily. In terms of tissue distribution, expressed in cells surrounding embryos, stems, seedlings, pollen, roots, shoots, inflorescence, flowers, siliques and leaves. Present in seedpods and seed embryos, but not in roots, inflorescence stems, leaves and flowers.

It catalyses the reaction Random endo-hydrolysis of N-acetyl-beta-D-glucosaminide (1-&gt;4)-beta-linkages in chitin and chitodextrins.. Probably involved in hypersensitive reaction upon Xanthomonas campestris infection. The chain is Endochitinase EP3 from Arabidopsis thaliana (Mouse-ear cress).